Here is a 306-residue protein sequence, read N- to C-terminus: Secretory carrier-associated membrane protein 1 (306 aa).

The tract at residues 1–66 (MAGRYDSNPF…LPPEPAAFGA (66 aa)) is disordered. The Cytoplasmic segment spans residues 1 to 141 (MAGRYDSNPF…EIPSHLQRMQ (141 aa)). Residues 25–36 (KAGGQPSYGGGA) are compositionally biased toward gly residues. The span at 40–55 (PNPRNVPSVSSNSRLS) shows a compositional bias: low complexity. Positions 72 to 109 (LDSSKDLKNREKELQAREAELNKREKELKRREEAAARA) form a coiled coil. The next 4 helical transmembrane spans lie at 142–162 (YVAFASFLGLACCLFWNVIAV), 174–194 (IWLLAIIYFISGVPGAYVLWY), 209–229 (FGLFFLVYLFHILFCVFSAVA), and 257–277 (IFYFVGFGLFCVESLLSIWVI). Residues 278 to 306 (QQVYMYFRGSGKAAEMKRDATRGAMRAAF) lie on the Cytoplasmic side of the membrane.

Belongs to the SCAMP family.

The protein localises to the cell membrane. The protein resides in the cytoplasmic vesicle. It localises to the secretory vesicle membrane. In terms of biological role, probably involved in membrane trafficking. The sequence is that of Secretory carrier-associated membrane protein 1 (SCAMP1) from Oryza sativa subsp. japonica (Rice).